A 241-amino-acid polypeptide reads, in one-letter code: Sugar fermentation stimulation protein homolog (241 aa).

Belongs to the SfsA family.

The sequence is that of Sugar fermentation stimulation protein homolog from Trichormus variabilis (strain ATCC 29413 / PCC 7937) (Anabaena variabilis).